The sequence spans 341 residues: S-adenosylmethionine:tRNA ribosyltransferase-isomerase (341 aa).

It belongs to the QueA family. In terms of assembly, monomer.

Its subcellular location is the cytoplasm. It carries out the reaction 7-aminomethyl-7-carbaguanosine(34) in tRNA + S-adenosyl-L-methionine = epoxyqueuosine(34) in tRNA + adenine + L-methionine + 2 H(+). It functions in the pathway tRNA modification; tRNA-queuosine biosynthesis. In terms of biological role, transfers and isomerizes the ribose moiety from AdoMet to the 7-aminomethyl group of 7-deazaguanine (preQ1-tRNA) to give epoxyqueuosine (oQ-tRNA). The chain is S-adenosylmethionine:tRNA ribosyltransferase-isomerase from Acetivibrio thermocellus (strain ATCC 27405 / DSM 1237 / JCM 9322 / NBRC 103400 / NCIMB 10682 / NRRL B-4536 / VPI 7372) (Clostridium thermocellum).